The following is a 222-amino-acid chain: N-(5'-phosphoribosyl)anthranilate isomerase (222 aa).

Belongs to the TrpF family.

The catalysed reaction is N-(5-phospho-beta-D-ribosyl)anthranilate = 1-(2-carboxyphenylamino)-1-deoxy-D-ribulose 5-phosphate. Its pathway is amino-acid biosynthesis; L-tryptophan biosynthesis; L-tryptophan from chorismate: step 3/5. The protein is N-(5'-phosphoribosyl)anthranilate isomerase of Beijerinckia indica subsp. indica (strain ATCC 9039 / DSM 1715 / NCIMB 8712).